The chain runs to 155 residues: Mitochondrial import protein 1 (155 aa).

Belongs to the MIM1 family.

The protein resides in the mitochondrion outer membrane. In terms of biological role, required for the assembly of the TOM (translocase of outer membrane) receptor complex, which is responsible for the recognition and translocation of cytosolically synthesized mitochondrial preproteins. The protein is Mitochondrial import protein 1 of Eremothecium gossypii (strain ATCC 10895 / CBS 109.51 / FGSC 9923 / NRRL Y-1056) (Yeast).